Here is a 282-residue protein sequence, read N- to C-terminus: 4-hydroxybenzoate octaprenyltransferase (282 aa).

9 helical membrane-spanning segments follow: residues 17 to 37 (IGIL…NQGF), 40 to 60 (IDLL…GCVI), 90 to 110 (AFIL…KLPI), 113 to 133 (FYFA…KRFL), 135 to 155 (APQL…FIAS), 163 to 183 (FIVL…MYAM), 207 to 227 (LIIA…AINK), 231 to 251 (WFFY…LKLI), and 262 to 282 (AFLV…LALI).

It belongs to the UbiA prenyltransferase family. Mg(2+) serves as cofactor.

It localises to the cell inner membrane. It catalyses the reaction all-trans-octaprenyl diphosphate + 4-hydroxybenzoate = 4-hydroxy-3-(all-trans-octaprenyl)benzoate + diphosphate. It participates in cofactor biosynthesis; ubiquinone biosynthesis. Functionally, catalyzes the prenylation of para-hydroxybenzoate (PHB) with an all-trans polyprenyl group. Mediates the second step in the final reaction sequence of ubiquinone-8 (UQ-8) biosynthesis, which is the condensation of the polyisoprenoid side chain with PHB, generating the first membrane-bound Q intermediate 3-octaprenyl-4-hydroxybenzoate. The polypeptide is 4-hydroxybenzoate octaprenyltransferase (Legionella pneumophila subsp. pneumophila (strain Philadelphia 1 / ATCC 33152 / DSM 7513)).